Here is a 429-residue protein sequence, read N- to C-terminus: Serine--tRNA ligase (429 aa).

229-231 (TAE) provides a ligand contact to L-serine. Position 260 to 262 (260 to 262 (RSE)) interacts with ATP. Position 283 (glutamate 283) interacts with L-serine. ATP is bound at residue 347–350 (EISS). Serine 383 serves as a coordination point for L-serine.

It belongs to the class-II aminoacyl-tRNA synthetase family. Type-1 seryl-tRNA synthetase subfamily. In terms of assembly, homodimer. The tRNA molecule binds across the dimer.

It is found in the cytoplasm. The catalysed reaction is tRNA(Ser) + L-serine + ATP = L-seryl-tRNA(Ser) + AMP + diphosphate + H(+). The enzyme catalyses tRNA(Sec) + L-serine + ATP = L-seryl-tRNA(Sec) + AMP + diphosphate + H(+). The protein operates within aminoacyl-tRNA biosynthesis; selenocysteinyl-tRNA(Sec) biosynthesis; L-seryl-tRNA(Sec) from L-serine and tRNA(Sec): step 1/1. Functionally, catalyzes the attachment of serine to tRNA(Ser). Is also able to aminoacylate tRNA(Sec) with serine, to form the misacylated tRNA L-seryl-tRNA(Sec), which will be further converted into selenocysteinyl-tRNA(Sec). The polypeptide is Serine--tRNA ligase (Orientia tsutsugamushi (strain Boryong) (Rickettsia tsutsugamushi)).